A 470-amino-acid polypeptide reads, in one-letter code: Uronate isomerase (470 aa).

This sequence belongs to the metallo-dependent hydrolases superfamily. Uronate isomerase family.

It catalyses the reaction D-glucuronate = D-fructuronate. It carries out the reaction aldehydo-D-galacturonate = keto-D-tagaturonate. It participates in carbohydrate metabolism; pentose and glucuronate interconversion. This Shigella boydii serotype 4 (strain Sb227) protein is Uronate isomerase.